A 258-amino-acid chain; its full sequence is MLMVISPAKTLDFASPLATERFTQPALLAESQKLINVARKLSPADIASLMHISDKLAVLNAERFNDWQPAFTPDNARQAILAFKGDVYTGLQAETFGEEDFTFAQQHLRMLSGLYGLLRPLDLMQAYRLEMGIKLANPAGKDLYSFWGDKLTTALNEALAQQGDNLLINLASDEYFRSVKPKRLEADIIKPVFLDEKNGKFKVISFYAKKARGLMCRYIIQNRLTKVEQLKKFDLDGYAFDGDTSSNNELVFKRREMA.

It belongs to the UPF0246 family.

This is UPF0246 protein ETA_07010 from Erwinia tasmaniensis (strain DSM 17950 / CFBP 7177 / CIP 109463 / NCPPB 4357 / Et1/99).